Consider the following 156-residue polypeptide: Ribosomal RNA large subunit methyltransferase H (156 aa).

S-adenosyl-L-methionine is bound by residues Leu-73, Gly-104, and 123–128; that span reads VSSLTL.

It belongs to the RNA methyltransferase RlmH family. Homodimer.

It is found in the cytoplasm. The catalysed reaction is pseudouridine(1915) in 23S rRNA + S-adenosyl-L-methionine = N(3)-methylpseudouridine(1915) in 23S rRNA + S-adenosyl-L-homocysteine + H(+). Functionally, specifically methylates the pseudouridine at position 1915 (m3Psi1915) in 23S rRNA. The protein is Ribosomal RNA large subunit methyltransferase H of Burkholderia mallei (strain NCTC 10247).